The sequence spans 741 residues: Isocitrate dehydrogenase [NADP] (741 aa).

The NADP(+) site is built by N85 and S87. D-threo-isocitrate is bound by residues S132, N135, R139, R145, and K255. N135 provides a ligand contact to NADP(+). D350 lines the Mn(2+) pocket. 2 residues coordinate D-threo-isocitrate: Y420 and R547. D548 is a Mn(2+) binding site. NADP(+) is bound by residues S585, H589, R600, D602, and R649.

It belongs to the monomeric-type IDH family. In terms of assembly, monomer. Mg(2+) serves as cofactor. It depends on Mn(2+) as a cofactor.

It localises to the cytoplasm. It carries out the reaction D-threo-isocitrate + NADP(+) = 2-oxoglutarate + CO2 + NADPH. With respect to regulation, activity is inhibited in the presence of Ca(2+). In terms of biological role, catalyzes the oxidative decarboxylation of isocitrate to 2-oxoglutarate and carbon dioxide with the concomitant reduction of NADP(+). The protein is Isocitrate dehydrogenase [NADP] of Azotobacter vinelandii.